Here is a 647-residue protein sequence, read N- to C-terminus: tRNA 5-methylaminomethyl-2-thiouridine biosynthesis bifunctional protein MnmC (647 aa).

Positions 1–227 (MLTWKNNLTP…KREMLIGSYS (227 aa)) are tRNA (mnm(5)s(2)U34)-methyltransferase. Residues 256 to 647 (VGAGIAGTTL…ARFLYRKVRK (392 aa)) form an FAD-dependent cmnm(5)s(2)U34 oxidoreductase region.

In the N-terminal section; belongs to the methyltransferase superfamily. tRNA (mnm(5)s(2)U34)-methyltransferase family. This sequence in the C-terminal section; belongs to the DAO family. The cofactor is FAD.

Its subcellular location is the cytoplasm. The enzyme catalyses 5-aminomethyl-2-thiouridine(34) in tRNA + S-adenosyl-L-methionine = 5-methylaminomethyl-2-thiouridine(34) in tRNA + S-adenosyl-L-homocysteine + H(+). Catalyzes the last two steps in the biosynthesis of 5-methylaminomethyl-2-thiouridine (mnm(5)s(2)U) at the wobble position (U34) in tRNA. Catalyzes the FAD-dependent demodification of cmnm(5)s(2)U34 to nm(5)s(2)U34, followed by the transfer of a methyl group from S-adenosyl-L-methionine to nm(5)s(2)U34, to form mnm(5)s(2)U34. The sequence is that of tRNA 5-methylaminomethyl-2-thiouridine biosynthesis bifunctional protein MnmC from Leptospira interrogans serogroup Icterohaemorrhagiae serovar Lai (strain 56601).